The sequence spans 1420 residues: MLLPSDVARLVLGYLQQENLTSTCQTFILESSNLKEYAEHCTDEGFIPACLLSLFGKNLTTILNEYVAMKAKETSNDVPTIMSSLWKKLDHTLSQIRSMHSSPGFAAHQRARTRNGIAEIKRQRWLASQAAPVSSELLVLPYASGQFTTSPLVATQAVKPTGPISTPVRSNIVVVNQSQPQSTVTNTAGESLNIIPGPQERKTQTSLMSPGRRKSESQKKSLTSSGPHSSRNFQDPNAFAVEKQMVIENAREKILSNKSLQEKLAENINKFLTSDSSVAQVPKQTDSNPTEPETSIDELLGLPSEIHMSEEAIQDILEQTESDPAFQALFDLFDYGKTKNNKNMPQISSQPMETNSNIVLPEETNLTIKSSFETEESDGQSGQPPFCTSYQNEDVLLNDLKSGNSHDVLPQESQENFSQISSNIQKKTFKTAIPAEQKCALDITLESVSNLSDFNQRGSSAECNEHCSELFASQIPTEAEVAVGEKNSLSADILSQSQYQPDQPSVPVTSFVSLGGETNDKNLVLSGKNSQLLSQSTPLTTKPSKSQLCENSNNIIKVKTNPQASESADSSETANRKTETNTVSPAAAQPQADCQDNSPLQSKPPPGIGESLGVNVTEKIEIHLEEPAPSDKQLSNDAASVDLNPTESKTEPLQSASAQEPEPPSVKDGDTIFLSLSEHNSCEEVALVLGEGNPVKNNNSLSSESGGSVGVSPETQNTDGKTSNSTEVDASSIVSLKIIISDDPFVSSDAELNSAVSSISGENLPTIILSSKSPAKNAEFVTCLSSEETASAVVSVEVGDSGSMEQNLLVLKPEEPMVNNTQNEDGIAFSANVAPCVPKDGGYIQLMPTTSTAFGNSSNILIATCMTDSTALGPTVSQSNVVVLPGSSAPMTAQPPQQQLQTPPKSNSAFAVSQAVSPNFSQGSAIIIASPVQPVLQGMVGMIPVSVVGQNGNTFSTPPQQVLHMPLAAPVCNRSIAQLPIPQKSQKAQGLRNKLITGKQVNNLTNLSSLSEACHTQRTEASDKNIATELGKKMEDTTISLSGERVAPPSKPFESHRRVLCFDSTVSSVANTQGSLYKMTSENKEKKEASFSHLDSPILSSTLKPPPNNAIKREREKTVPKILSKSETASSRHTTVKEVQSEKKVSPTEVALESLHKATANKENELCGDGERPKNADTSKLPGGQQNGSLRNEKAIASLQELTKKQATPSNNKNATSVGGTVKDQKQEQSKPASSLIGAEILQDVPIHSPANRSADTDLPVPRTPGSGAGEKHKEEPSDSMKAPASRRCGEEGSMPRVMIPPVTADLPACSPASETGSENSVSMAAHTLMILSRAAIARTTATPLKDNTQQFRTSSRSTTKKRKIEELDECERNSRTSGKNLANSSVPMKKKKIKKKKLPSSFPAGMDVDKFLLSLHYDE.

The interval 1-319 (MLLPSDVARL…EEAIQDILEQ (319 aa)) is interaction with MIZF. A LisH domain is found at 3-35 (LPSDVARLVLGYLQQENLTSTCQTFILESSNLK). Required for activation of histone gene transcription and interaction with MIZF regions lie at residues 5–25 (SDVARLVLGYLQQENLTSTCQ) and 121–145 (KRQRWLASQAAPVSSELLVLPYASG). The span at 179-190 (QPQSTVTNTAGE) shows a compositional bias: polar residues. Positions 179 to 236 (QPQSTVTNTAGESLNIIPGPQERKTQTSLMSPGRRKSESQKKSLTSSGPHSSRNFQDP) are disordered. At Ser209 the chain carries Phosphoserine. A compositionally biased stretch (polar residues) spans 220 to 235 (KSLTSSGPHSSRNFQD). The interval 263–339 (KLAENINKFL…FDLFDYGKTK (77 aa)) is mediates transcriptional activation. The segment covering 534 to 573 (SQSTPLTTKPSKSQLCENSNNIIKVKTNPQASESADSSET) has biased composition (polar residues). Disordered stretches follow at residues 534-612 (SQST…GESL), 625-670 (EEPA…KDGD), and 696-727 (KNNNSLSSESGGSVGVSPETQNTDGKTSNSTE). Phosphoserine occurs at positions 552 and 598. The required for acceleration of G1 phase stretch occupies residues 628–652 (APSDKQLSNDAASVDLNPTESKTEP). Residues 632–658 (KQLSNDAASVDLNPTESKTEPLQSASA) show a composition bias toward polar residues. Low complexity predominate over residues 697–712 (NNNSLSSESGGSVGVS). Residues 713 to 727 (PETQNTDGKTSNSTE) are compositionally biased toward polar residues. Phosphoserine; by CDK2 occurs at positions 771 and 773. Required for acceleration of G1 phase stretches follow at residues 822 to 847 (QNEDGIAFSANVAPCVPKDGGYIQLM) and 1033 to 1048 (KMEDTTISLSGERVAP). 3 disordered regions span residues 1089 to 1190 (ASFS…NGSL), 1202 to 1234 (LTKKQATPSNNKNATSVGGTVKDQKQEQSKPAS), and 1249 to 1297 (SPAN…SMPR). At Ser1096 the chain carries Phosphoserine; by CDK2. Residues Lys1112 and Lys1144 each participate in a glycyl lysine isopeptide (Lys-Gly) (interchain with G-Cter in SUMO2) cross-link. Composition is skewed to basic and acidic residues over residues 1135 to 1146 (TVKEVQSEKKVS) and 1154 to 1177 (SLHKATANKENELCGDGERPKNAD). Position 1146 is a phosphoserine (Ser1146). The segment covering 1205 to 1219 (KQATPSNNKNATSVG) has biased composition (polar residues). Lys1223 bears the N6-acetyllysine mark. Residues 1223–1247 (KDQKQEQSKPASSLIGAEILQDVPI) form a required for acceleration of G1 phase region. Ser1249 carries the phosphoserine modification. Thr1264 carries the phosphothreonine; by CDK2 modification. Residues 1270-1279 (GEKHKEEPSD) show a composition bias toward basic and acidic residues. Lys1274 is covalently cross-linked (Glycyl lysine isopeptide (Lys-Gly) (interchain with G-Cter in SUMO2)). A required for acceleration of G1 phase region spans residues 1319 to 1342 (ENSVSMAAHTLMILSRAAIARTTA). Thr1343 carries the phosphothreonine; by CDK2 modification. Positions 1348 to 1400 (NTQQFRTSSRSTTKKRKIEELDECERNSRTSGKNLANSSVPMKKKKIKKKKLP) are disordered. Positions 1376 to 1387 (RTSGKNLANSSV) are enriched in polar residues. Over residues 1389-1399 (MKKKKIKKKKL) the composition is skewed to basic residues.

The protein belongs to the NPAT family. In terms of assembly, interacts with the cylin/CDK complexes CCNE1/CDK2 and CCNA1/CDK2. Interacts with BZW1, CASP8AP2, CREBBP, MIZF and YY1. Interacts with the RUVBL1, RUVBL2 and TRRAP subunits of the NuA4 complex. May also interact with GAPDH, NME1, NME2 and STIP1. Post-translationally, phosphorylated at Ser-771, Ser-773, Ser-1096, Thr-1264 and Thr-1343 by CCNE1/CDK2 at G1-S transition and until prophase, which promotes association with histone gene clusters and stimulates activation of histone transcription. Also phosphorylated by CCNA1/CDK2 in vitro.

Its subcellular location is the nucleus. Functionally, required for progression through the G1 and S phases of the cell cycle and for S phase entry. Activates transcription of the histone H2A, histone H2B, histone H3 and histone H4 genes in conjunction with MIZF. Also positively regulates the ATM, MIZF and PRKDC promoters. Transcriptional activation may be accomplished at least in part by the recruitment of the NuA4 histone acetyltransferase (HAT) complex to target gene promoters. Required for early embryonic development. The protein is Protein NPAT (Npat) of Mus musculus (Mouse).